The sequence spans 183 residues: ATP synthase subunit delta (183 aa).

It belongs to the ATPase delta chain family. As to quaternary structure, F-type ATPases have 2 components, F(1) - the catalytic core - and F(0) - the membrane proton channel. F(1) has five subunits: alpha(3), beta(3), gamma(1), delta(1), epsilon(1). F(0) has three main subunits: a(1), b(2) and c(10-14). The alpha and beta chains form an alternating ring which encloses part of the gamma chain. F(1) is attached to F(0) by a central stalk formed by the gamma and epsilon chains, while a peripheral stalk is formed by the delta and b chains.

The protein localises to the cell inner membrane. F(1)F(0) ATP synthase produces ATP from ADP in the presence of a proton or sodium gradient. F-type ATPases consist of two structural domains, F(1) containing the extramembraneous catalytic core and F(0) containing the membrane proton channel, linked together by a central stalk and a peripheral stalk. During catalysis, ATP synthesis in the catalytic domain of F(1) is coupled via a rotary mechanism of the central stalk subunits to proton translocation. In terms of biological role, this protein is part of the stalk that links CF(0) to CF(1). It either transmits conformational changes from CF(0) to CF(1) or is implicated in proton conduction. This is ATP synthase subunit delta from Solidesulfovibrio magneticus (strain ATCC 700980 / DSM 13731 / RS-1) (Desulfovibrio magneticus).